An 825-amino-acid chain; its full sequence is MTVLQEPVQAAIWQALNHYAYRDAVFLAERLYAEVHSEEALFLLATCYYRSGKAYKAYRLLKGHSCTTPQCKYLLAKCCVDLSKLAEGEQILSGGVFNKQKSHDDIVTEFGDSACFTLSLLGHVYCKTDRLAKGSECYQKSLSLNPFLWSPFESLCEIGEKPDPDQTFKLTSLQNFSSCLPNSCTTLVSNHSLSHRQPETVLTETPQDTIELNRLNLESSNSKYSLNTDSSVSYIDSAVISPDTVPLGTGTSILSKQVQNKPKTGRSLLGGPAALSPLTPSFGILPLETPSPGDGSYLQNYTNTSSVIDVPPTGAPSKKSVARIGQTGTKSVFSQSGNSREVTPILVAQTQSSGPQTSTTPQVLSPTITSPPNALPRRSSRLFTSDSSTTKENSKKLKMKFPPKIPNRKTKSKTNKGGITQPNINDSLEITKLDSSIISEGKISTITPQIQAFNLQKAAAEGLMSLLREMGKGYLALCSYNCKEAINILSHLPSHHYNTGWVLCQIGRAYFELSEYMQAERIFSEVRRIENYRVEGMEIYSTTLWHLQKDVALSVLSKDLTDMDKNSPEAWCAAGNCFSLQREHDIAIKFFQRAIQVDPNYAYAYTLLGHEFVLTEELDKALACFRNAIRVNPRHYNAWYGLGMIYYKQEKFSLAEMHFQKALDINPQSSVLLCHIGVVQHALKKSEKALDTLNKAIVIDPKNPLCKFHRASVLFANEKYKSALQELEELKQIVPKESLVYFLIGKVYKKLGQTHLALMNFSWAMDLDPKGANNQIKEAIDKRYLPDDEEPITQEEQIMGTDESQESSMTDADDTQLHAAESDEF.

TPR repeat units lie at residues 6–35 (EPVQ…YAEV), 38–65 (EEAL…KGHS), 67–99 (TTPQ…VFNK), and 115–145 (CFTL…LSLN). 3 positions are modified to phosphothreonine: Thr205, Thr209, and Thr244. Residue Ser291 is modified to Phosphoserine. Positions 305–423 (SSVIDVPPTG…TNKGGITQPN (119 aa)) are disordered. A Phosphothreonine modification is found at Thr313. Positions 326 to 341 (QTGTKSVFSQSGNSRE) are enriched in polar residues. A Phosphoserine modification is found at Ser339. The span at 349-362 (QTQSSGPQTSTTPQ) shows a compositional bias: low complexity. The span at 363 to 372 (VLSPTITSPP) shows a compositional bias: polar residues. Position 367 is a phosphothreonine (Thr367). Phosphoserine occurs at positions 380 and 387. Over residues 381–391 (RLFTSDSSTTK) the composition is skewed to polar residues. Over residues 396–414 (KLKMKFPPKIPNRKTKSKT) the composition is skewed to basic residues. Phosphoserine is present on Ser427. Residue Thr431 is modified to Phosphothreonine. Residues Ser436 and Ser439 each carry the phosphoserine modification. A Phosphothreonine modification is found at Thr447. TPR repeat units follow at residues 465-495 (SLLR…LPSH), 499-528 (TGWV…EVRR), 533-563 (RVEG…LTDM), 567-598 (SPEA…IQVD), 601-631 (YAYA…AIRV), 635-667 (HYNA…DINP), 670-702 (SVLL…IDPK), 704-734 (PLCK…KQIV), and 737-768 (ESLV…MDLD). The tract at residues 782-825 (KRYLPDDEEPITQEEQIMGTDESQESSMTDADDTQLHAAESDEF) is disordered. Phosphoserine is present on Ser822.

It belongs to the APC3/CDC27 family. As to quaternary structure, homodimer. The mammalian APC/C is composed at least of 14 distinct subunits ANAPC1, ANAPC2, CDC27/APC3, ANAPC4, ANAPC5, CDC16/APC6, ANAPC7, CDC23/APC8, ANAPC10, ANAPC11, CDC26/APC12, ANAPC13, ANAPC15 and ANAPC16 that assemble into a complex of at least 19 chains with a combined molecular mass of around 1.2 MDa; APC/C interacts with FZR1 and FBXO5. Interacts with RB. Interacts with FAM168B/MANI. Interacts with MCPH1. Phosphorylated. Phosphorylation on Ser-427 and Thr-447 occurs specifically during mitosis.

Its subcellular location is the nucleus. It localises to the cytoplasm. The protein resides in the cytoskeleton. It is found in the spindle. It participates in protein modification; protein ubiquitination. In terms of biological role, component of the anaphase promoting complex/cyclosome (APC/C), a cell cycle-regulated E3 ubiquitin ligase that controls progression through mitosis and the G1 phase of the cell cycle. The APC/C complex acts by mediating ubiquitination and subsequent degradation of target proteins: it mainly mediates the formation of 'Lys-11'-linked polyubiquitin chains and, to a lower extent, the formation of 'Lys-48'- and 'Lys-63'-linked polyubiquitin chains. The APC/C complex catalyzes assembly of branched 'Lys-11'-/'Lys-48'-linked branched ubiquitin chains on target proteins. The protein is Cell division cycle protein 27 homolog (CDC27) of Bos taurus (Bovine).